The primary structure comprises 188 residues: Probable manganese efflux pump MntP (188 aa).

The next 5 membrane-spanning stretches (helical) occupy residues 3–23 (ITAT…ASVG), 66–86 (LEWN…RMII), 106–128 (WLLV…GLAF), 143–163 (ATLI…SIIG), and 168–188 (ILGG…HFHG).

The protein belongs to the MntP (TC 9.B.29) family.

It localises to the cell inner membrane. In terms of biological role, probably functions as a manganese efflux pump. This is Probable manganese efflux pump MntP from Shigella sonnei (strain Ss046).